A 390-amino-acid polypeptide reads, in one-letter code: Phosphopentomutase (390 aa).

Residues Asp-11, Asp-283, His-288, Asp-324, His-325, and His-336 each contribute to the Mn(2+) site.

This sequence belongs to the phosphopentomutase family. The cofactor is Mn(2+).

It is found in the cytoplasm. It carries out the reaction 2-deoxy-alpha-D-ribose 1-phosphate = 2-deoxy-D-ribose 5-phosphate. The enzyme catalyses alpha-D-ribose 1-phosphate = D-ribose 5-phosphate. It functions in the pathway carbohydrate degradation; 2-deoxy-D-ribose 1-phosphate degradation; D-glyceraldehyde 3-phosphate and acetaldehyde from 2-deoxy-alpha-D-ribose 1-phosphate: step 1/2. In terms of biological role, isomerase that catalyzes the conversion of deoxy-ribose 1-phosphate (dRib-1-P) and ribose 1-phosphate (Rib-1-P) to deoxy-ribose 5-phosphate (dRib-5-P) and ribose 5-phosphate (Rib-5-P), respectively. The sequence is that of Phosphopentomutase from Alkaliphilus metalliredigens (strain QYMF).